Reading from the N-terminus, the 646-residue chain is Lipoteichoic acid synthase (646 aa).

The Cytoplasmic portion of the chain corresponds to 1-7 (MSLPKKK). Residues 8–28 (IGIFAFFLLTVFTITLKTYFS) form a helical membrane-spanning segment. Residues 29–43 (YYVDFSLGVKGLVQN) are Extracellular-facing. The chain crosses the membrane as a helical span at residues 44–64 (LILIMNPYSLIALVLSVFLFF). Topologically, residues 65-68 (KGKK) are cytoplasmic. Residues 69-89 (AFWFIFIGGFLLTFLLYANVV) form a helical membrane-spanning segment. At 90-119 (YFRFFSDFLTFSTLNQAGNVESMGGAVSAS) the chain is on the extracellular side. The chain crosses the membrane as a helical span at residues 120–140 (FKWYDFVYFIDTIIYLAILIF). Residues 141-153 (KRKWLDNRAFSKK) lie on the Cytoplasmic side of the membrane. Residues 154-174 (FVPVVMATSVALFFLNLAFAE) form a helical membrane-spanning segment. The Extracellular segment spans residues 175–646 (TDRPELLTRT…KSGPKGNEKK (472 aa)). E255 and T300 together coordinate Mn(2+). T300 is a catalytic residue. H416 is a substrate binding site. Positions 475 and 476 each coordinate Mn(2+).

This sequence belongs to the LTA synthase family. Proteolytically cleaved.

It localises to the cell membrane. The protein localises to the secreted. It participates in cell wall biogenesis; lipoteichoic acid biosynthesis. Its function is as follows. Catalyzes the polymerization of lipoteichoic acid (LTA) polyglycerol phosphate, a reaction that presumably uses phosphatidylglycerol (PG) as substrate. Is required for staphylococcal growth and cell division process. The protein is Lipoteichoic acid synthase (ltaS) of Staphylococcus epidermidis (strain ATCC 12228 / FDA PCI 1200).